A 298-amino-acid polypeptide reads, in one-letter code: Beta-soluble NSF attachment protein (298 aa).

It belongs to the SNAP family. Interacts with PRKCABP, and disrupts the interaction between GRIA2 and PRKCABP, leading to the internalization of GRIA2.

The protein localises to the membrane. Required for vesicular transport between the endoplasmic reticulum and the Golgi apparatus. The chain is Beta-soluble NSF attachment protein (NAPB) from Homo sapiens (Human).